Reading from the N-terminus, the 423-residue chain is MSDSKSDGQFYSVQVADSTFTVLKRYQQLKPIGSGAQGIVCAAFDTVLGINVAVKKLSRPFQNQTHAKRAYRELVLLKCVNHKNIISLLNVFTPQKTLEEFQDVYLVMELMDANLCQVIHMELDHERMSYLLYQMLCGIKHLHSAGIIHRDLKPSNIVVKSDCTLKILDFGLARTACTNFMMTPYVVTRYYRAPEVILGMGYKENVDIWSVGCIMGELVKGCVIFQGTDHIDQWNKVIEQLGTPSAEFMKKLQPTVRNYVENRPKYPGIKFEELFPDWIFPSESERDKIKTSQARDLLSKMLVIDPDKRISVDEALRHPYITVWYDPAEAEAPPPQIYDAQLEEREHAIEEWKELIYKEVMDWEERSKNGVKDQPSDAAVSSKATPSQSSSINDISSMSTEHTLASDTDSSLDASTGPLEGCR.

The region spanning 26–321 (YQQLKPIGSG…VDEALRHPYI (296 aa)) is the Protein kinase domain. Residues 32–40 (IGSGAQGIV) and K55 contribute to the ATP site. The Proton acceptor role is filled by D151. T183 bears the Phosphothreonine; by MAP2K7 mark. Positions 183 to 185 (TPY) match the TXY motif. Y185 bears the Phosphotyrosine; by MAP2K4 mark. The segment covering 366 to 375 (RSKNGVKDQP) has biased composition (basic and acidic residues). Positions 366 to 423 (RSKNGVKDQPSDAAVSSKATPSQSSSINDISSMSTEHTLASDTDSSLDASTGPLEGCR) are disordered. Over residues 387–416 (SQSSSINDISSMSTEHTLASDTDSSLDAST) the composition is skewed to low complexity.

Belongs to the protein kinase superfamily. CMGC Ser/Thr protein kinase family. MAP kinase subfamily. In terms of assembly, interacts with MECOM. Binds to at least four scaffolding proteins, MAPK8IP1/JIP-1, MAPK8IP2/JIP-2, MAPK8IP3/JIP-3/JSAP1 and SPAG9/MAPK8IP4/JIP-4. These proteins also bind other components of the JNK signaling pathway. Interacts with NFATC4. Interacts with ATF7; the interaction does not phosphorylate ATF7 but acts as a docking site for ATF7-associated partners such as JUN. Interacts with BCL10. Interacts with CTNNB1 and GSK3B. Interacts with DCLK2. Interacts with MAPKBP1. Interacts with POU5F1; phosphorylates POU5F1 at 'Ser-347'. Found in a complex with SH3RF1, RAC2, MAP3K7/TAK1, MAP2K7/MKK7, MAPK8IP1/JIP1 and MAPK8/JNK1. Mg(2+) is required as a cofactor. In terms of processing, dually phosphorylated on Thr-183 and Tyr-185 by MAP2K7 and MAP2K4, which activates the enzyme. Autophosphorylated in vitro.

Its subcellular location is the cytoplasm. The protein localises to the nucleus. It carries out the reaction L-seryl-[protein] + ATP = O-phospho-L-seryl-[protein] + ADP + H(+). It catalyses the reaction L-threonyl-[protein] + ATP = O-phospho-L-threonyl-[protein] + ADP + H(+). With respect to regulation, activated by threonine and tyrosine phosphorylation by either of two dual specificity kinases, MAP2K4 and MAP2K7. MAP2K4 shows a strong preference for Tyr-185 while MAP2K7 phosphorylates Tyr-183 preferentially. Inhibited by dual specificity phosphatases, such as DUSP1. Its function is as follows. Serine/threonine-protein kinase involved in various processes such as cell proliferation, differentiation, migration, transformation and programmed cell death. Extracellular stimuli such as pro-inflammatory cytokines or physical stress stimulate the stress-activated protein kinase/c-Jun N-terminal kinase (SAP/JNK) signaling pathway. In this cascade, two dual specificity kinases MAP2K4/MKK4 and MAP2K7/MKK7 phosphorylate and activate MAPK9/JNK2. In turn, MAPK9/JNK2 phosphorylates a number of transcription factors, primarily components of AP-1 such as JUN and ATF2 and thus regulates AP-1 transcriptional activity. In response to oxidative or ribotoxic stresses, inhibits rRNA synthesis by phosphorylating and inactivating the RNA polymerase 1-specific transcription initiation factor RRN3. Promotes stressed cell apoptosis by phosphorylating key regulatory factors including TP53 and YAP1. In T-cells, MAPK8 and MAPK9 are required for polarized differentiation of T-helper cells into Th1 cells. Upon T-cell receptor (TCR) stimulation, is activated by CARMA1, BCL10, MAP2K7 and MAP3K7/TAK1 to regulate JUN protein levels. Plays an important role in the osmotic stress-induced epithelial tight-junctions disruption. When activated, promotes beta-catenin/CTNNB1 degradation and inhibits the canonical Wnt signaling pathway. Also participates in neurite growth in spiral ganglion neurons. Phosphorylates the CLOCK-BMAL1 heterodimer and plays a role in the regulation of the circadian clock. Phosphorylates POU5F1, which results in the inhibition of POU5F1's transcriptional activity and enhances its proteasomal degradation. Phosphorylates ALKBH5 in response to reactive oxygen species (ROS), promoting ALKBH5 sumoylation and inactivation. This is Mitogen-activated protein kinase 9 (Mapk9) from Rattus norvegicus (Rat).